The chain runs to 202 residues: MENLIIYAFIYLLGSIPFGLILAKFFAKTDIKKEGSKSIGATNVLRVVKEKNPKLAKKLAIATIILDFAKAAIPLLILKFLHYDQALLWSVAVLAIFGHCFSIYLLFEGGKGIATGAGAMIVLLPLEVLTAFIVWVVIGKIFKISSLASLAALLAFVISSFIFNYDLEIHTHAPVFIIAFIIIYKHLPNIKRLIFKEECKVI.

Transmembrane regions (helical) follow at residues 3–23 (NLIIYAFIYLLGSIPFGLILA), 61–81 (IATIILDFAKAAIPLLILKFL), 87–107 (LLWSVAVLAIFGHCFSIYLLF), 118–138 (GAMIVLLPLEVLTAFIVWVVI), 144–164 (ISSLASLAALLAFVISSFIFN), and 167–187 (LEIHTHAPVFIIAFIIIYKHL).

This sequence belongs to the PlsY family. Probably interacts with PlsX.

The protein localises to the cell inner membrane. The enzyme catalyses an acyl phosphate + sn-glycerol 3-phosphate = a 1-acyl-sn-glycero-3-phosphate + phosphate. It functions in the pathway lipid metabolism; phospholipid metabolism. Catalyzes the transfer of an acyl group from acyl-phosphate (acyl-PO(4)) to glycerol-3-phosphate (G3P) to form lysophosphatidic acid (LPA). This enzyme utilizes acyl-phosphate as fatty acyl donor, but not acyl-CoA or acyl-ACP. The polypeptide is Glycerol-3-phosphate acyltransferase (Campylobacter jejuni subsp. jejuni serotype O:23/36 (strain 81-176)).